Consider the following 347-residue polypeptide: NADH-ubiquinone oxidoreductase chain 2 (347 aa).

11 consecutive transmembrane segments (helical) span residues 3 to 23, 25 to 45, 66 to 86, 96 to 116, 122 to 142, 149 to 169, 178 to 198, 201 to 221, 237 to 257, 274 to 294, and 323 to 343; these read PPIL…VMLS, HWLL…PVLM, ASML…QWVV, IMMT…FWVP, ITLT…MSVL, INTN…GWGG, IMAY…IYNP, MILN…LFML, FPLI…LPPL, NMII…YFYL, and TILL…TPML.

This sequence belongs to the complex I subunit 2 family. In terms of assembly, core subunit of respiratory chain NADH dehydrogenase (Complex I) which is composed of 45 different subunits. Interacts with TMEM242.

It localises to the mitochondrion inner membrane. The catalysed reaction is a ubiquinone + NADH + 5 H(+)(in) = a ubiquinol + NAD(+) + 4 H(+)(out). In terms of biological role, core subunit of the mitochondrial membrane respiratory chain NADH dehydrogenase (Complex I) which catalyzes electron transfer from NADH through the respiratory chain, using ubiquinone as an electron acceptor. Essential for the catalytic activity and assembly of complex I. This Canis rufus (Red wolf) protein is NADH-ubiquinone oxidoreductase chain 2.